A 363-amino-acid chain; its full sequence is Protein RecA (363 aa).

79–86 provides a ligand contact to ATP; that stretch reads GPESSGKT.

The protein belongs to the RecA family.

Its subcellular location is the cytoplasm. Its function is as follows. Can catalyze the hydrolysis of ATP in the presence of single-stranded DNA, the ATP-dependent uptake of single-stranded DNA by duplex DNA, and the ATP-dependent hybridization of homologous single-stranded DNAs. It interacts with LexA causing its activation and leading to its autocatalytic cleavage. The sequence is that of Protein RecA from Methylobacterium radiotolerans (strain ATCC 27329 / DSM 1819 / JCM 2831 / NBRC 15690 / NCIMB 10815 / 0-1).